A 228-amino-acid chain; its full sequence is C-type lectin domain-containing protein 88 (228 aa).

A signal peptide spans 1 to 18 (MQFIFFGTLFSGLLLVCA). Ser-27 carries an O-linked (Xyl...) (chondroitin sulfate) serine glycan. Residues 88–218 (YSDSCYWVET…CTYLFYSICE (131 aa)) form the C-type lectin domain. 2 cysteine pairs are disulfide-bonded: Cys-109-Cys-217 and Cys-188-Cys-209. Asn-220 carries N-linked (GlcNAc...) asparagine glycosylation.

This chain is C-type lectin domain-containing protein 88, found in Caenorhabditis elegans.